Consider the following 517-residue polypeptide: Crotonobetaine/carnitine--CoA ligase (517 aa).

Belongs to the ATP-dependent AMP-binding enzyme family.

It catalyses the reaction 4-(trimethylamino)butanoate + ATP + CoA = 4-(trimethylamino)butanoyl-CoA + AMP + diphosphate. It carries out the reaction crotonobetaine + ATP + CoA = crotonobetainyl-CoA + AMP + diphosphate. The catalysed reaction is (R)-carnitine + ATP + CoA = (R)-carnitinyl-CoA + AMP + diphosphate. It functions in the pathway amine and polyamine metabolism; carnitine metabolism. Functionally, catalyzes the transfer of CoA to carnitine, generating the initial carnitinyl-CoA needed for the CaiB reaction cycle. Also has activity toward crotonobetaine and gamma-butyrobetaine. The polypeptide is Crotonobetaine/carnitine--CoA ligase (Escherichia coli O17:K52:H18 (strain UMN026 / ExPEC)).